We begin with the raw amino-acid sequence, 558 residues long: Potassium-transporting ATPase potassium-binding subunit 2 (558 aa).

12 helical membrane-spanning segments follow: residues 1 to 21 (MSIV…SRYL), 60 to 80 (IKHF…LLLI), 129 to 149 (VITF…IAML), 169 to 189 (FIVR…ISQG), 246 to 266 (WSNY…VFLF), 281 to 301 (IMIF…CLYF), 326 to 346 (FGIG…TGTV), 353 to 373 (LTPL…VFGG), 376 to 396 (VGLM…SLMI), 415 to 435 (IALS…LAFI), 485 to 505 (IVML…VSSL), and 523 to 543 (LFFS…TFLP).

Belongs to the KdpA family. As to quaternary structure, the system is composed of three essential subunits: KdpA, KdpB and KdpC.

It localises to the cell membrane. Part of the high-affinity ATP-driven potassium transport (or Kdp) system, which catalyzes the hydrolysis of ATP coupled with the electrogenic transport of potassium into the cytoplasm. This subunit binds the extracellular potassium ions and delivers the ions to the membrane domain of KdpB through an intramembrane tunnel. The polypeptide is Potassium-transporting ATPase potassium-binding subunit 2 (Staphylococcus aureus (strain Mu50 / ATCC 700699)).